The chain runs to 792 residues: Probable phosphoketolase (792 aa).

Belongs to the XFP family. The cofactor is thiamine diphosphate.

The polypeptide is Probable phosphoketolase (Brucella melitensis biotype 1 (strain ATCC 23456 / CCUG 17765 / NCTC 10094 / 16M)).